The chain runs to 450 residues: Adenylosuccinate lyase (450 aa).

N(6)-(1,2-dicarboxyethyl)-AMP is bound by residues 9-10 (RY), 75-77 (HHD), and 101-102 (TS). His-149 acts as the Proton donor/acceptor in catalysis. A N(6)-(1,2-dicarboxyethyl)-AMP-binding site is contributed by Gln-223. Ser-273 (proton donor/acceptor) is an active-site residue. N(6)-(1,2-dicarboxyethyl)-AMP contacts are provided by residues Ser-274, 279–281 (KRN), and 318–322 (SVERV).

Belongs to the lyase 1 family. Adenylosuccinate lyase subfamily. In terms of assembly, homotetramer. Residues from neighboring subunits contribute catalytic and substrate-binding residues to each active site.

It catalyses the reaction N(6)-(1,2-dicarboxyethyl)-AMP = fumarate + AMP. The catalysed reaction is (2S)-2-[5-amino-1-(5-phospho-beta-D-ribosyl)imidazole-4-carboxamido]succinate = 5-amino-1-(5-phospho-beta-D-ribosyl)imidazole-4-carboxamide + fumarate. It participates in purine metabolism; AMP biosynthesis via de novo pathway; AMP from IMP: step 2/2. It functions in the pathway purine metabolism; IMP biosynthesis via de novo pathway; 5-amino-1-(5-phospho-D-ribosyl)imidazole-4-carboxamide from 5-amino-1-(5-phospho-D-ribosyl)imidazole-4-carboxylate: step 2/2. Its function is as follows. Catalyzes two reactions in de novo purine nucleotide biosynthesis. Catalyzes the breakdown of 5-aminoimidazole- (N-succinylocarboxamide) ribotide (SAICAR or 2-[5-amino-1-(5-phospho-beta-D-ribosyl)imidazole-4-carboxamido]succinate) to 5-aminoimidazole-4-carboxamide ribotide (AICAR or 5-amino-1-(5-phospho-beta-D-ribosyl)imidazole-4-carboxamide) and fumarate, and of adenylosuccinate (ADS or N(6)-(1,2-dicarboxyethyl)-AMP) to adenosine monophosphate (AMP) and fumarate. This is Adenylosuccinate lyase (purB) from Pyrococcus abyssi (strain GE5 / Orsay).